Consider the following 238-residue polypeptide: ATP synthase subunit a (238 aa).

A run of 7 helical transmembrane segments spans residues 35–55 (SNVI…TLAT), 61–81 (VPSG…SFVV), 94–114 (FLCA…VPGL), 128–148 (ALTV…AGYI), 151–171 (FMGP…ISHL), 190–210 (IVLV…MYFL), and 211–231 (FSLA…IYLK).

It belongs to the ATPase A chain family. As to quaternary structure, F-type ATPases have 2 components, CF(1) - the catalytic core - and CF(0) - the membrane proton channel. CF(1) has five subunits: alpha(3), beta(3), gamma(1), delta(1), epsilon(1). CF(0) has three main subunits: a(1), b(2) and c(9-12). The alpha and beta chains form an alternating ring which encloses part of the gamma chain. CF(1) is attached to CF(0) by a central stalk formed by the gamma and epsilon chains, while a peripheral stalk is formed by the delta and b chains.

It is found in the cell inner membrane. Functionally, key component of the proton channel; it plays a direct role in the translocation of protons across the membrane. In Solidesulfovibrio magneticus (strain ATCC 700980 / DSM 13731 / RS-1) (Desulfovibrio magneticus), this protein is ATP synthase subunit a.